The primary structure comprises 92 residues: Small ribosomal subunit protein uS19 (92 aa).

This sequence belongs to the universal ribosomal protein uS19 family.

In terms of biological role, protein S19 forms a complex with S13 that binds strongly to the 16S ribosomal RNA. This Aliivibrio fischeri (strain ATCC 700601 / ES114) (Vibrio fischeri) protein is Small ribosomal subunit protein uS19.